Consider the following 339-residue polypeptide: Tetraacyldisaccharide 4'-kinase (339 aa).

61-68 (TAGGTGKT) provides a ligand contact to ATP.

Belongs to the LpxK family.

It carries out the reaction a lipid A disaccharide + ATP = a lipid IVA + ADP + H(+). It functions in the pathway glycolipid biosynthesis; lipid IV(A) biosynthesis; lipid IV(A) from (3R)-3-hydroxytetradecanoyl-[acyl-carrier-protein] and UDP-N-acetyl-alpha-D-glucosamine: step 6/6. Functionally, transfers the gamma-phosphate of ATP to the 4'-position of a tetraacyldisaccharide 1-phosphate intermediate (termed DS-1-P) to form tetraacyldisaccharide 1,4'-bis-phosphate (lipid IVA). This Stenotrophomonas maltophilia (strain R551-3) protein is Tetraacyldisaccharide 4'-kinase.